A 476-amino-acid chain; its full sequence is Nodulation protein NoeA (476 aa).

Not known; does not seem to participate in nod factor synthesis but required for nodulation on some specific Medicago species such as M.littoralis. This Rhizobium meliloti (strain 1021) (Ensifer meliloti) protein is Nodulation protein NoeA (noeA).